Reading from the N-terminus, the 260-residue chain is uncharacterized protein (260 aa).

The signal sequence occupies residues 1 to 22 (MGYSKRFALYISILILIVMVAG). Cysteine 23 carries the N-palmitoyl cysteine lipid modification. The S-diacylglycerol cysteine moiety is linked to residue cysteine 23.

It belongs to the staphylococcal tandem lipoprotein family.

Its subcellular location is the cell membrane. This is an uncharacterized protein from Staphylococcus aureus (strain N315).